The primary structure comprises 143 residues: Putative phosphotransferase IIA component SgcA (143 aa).

The PTS EIIA type-2 domain maps to 1 to 143 (MINDIKWVQA…DDALFALVSG (143 aa)). Catalysis depends on His63, which acts as the Tele-phosphohistidine intermediate.

The protein localises to the cytoplasm. Functionally, the phosphoenolpyruvate-dependent sugar phosphotransferase system (sugar PTS), a major carbohydrate active -transport system, catalyzes the phosphorylation of incoming sugar substrates concomitantly with their translocation across the cell membrane. The polypeptide is Putative phosphotransferase IIA component SgcA (sgcA) (Escherichia coli (strain K12)).